The chain runs to 274 residues: Large ribosomal subunit protein uL2 (274 aa).

The segment at 223-274 (VVMNPVDHPHGGGEGRTSGGRHPVSPWGVPTKGFKTRKNKRTDKYIVRRRTK) is disordered. Residues 256-274 (FKTRKNKRTDKYIVRRRTK) are compositionally biased toward basic residues.

This sequence belongs to the universal ribosomal protein uL2 family. In terms of assembly, part of the 50S ribosomal subunit. Forms a bridge to the 30S subunit in the 70S ribosome.

Its function is as follows. One of the primary rRNA binding proteins. Required for association of the 30S and 50S subunits to form the 70S ribosome, for tRNA binding and peptide bond formation. It has been suggested to have peptidyltransferase activity; this is somewhat controversial. Makes several contacts with the 16S rRNA in the 70S ribosome. This is Large ribosomal subunit protein uL2 from Vibrio atlanticus (strain LGP32) (Vibrio splendidus (strain Mel32)).